The following is a 156-amino-acid chain: Acyl carrier protein, mitochondrial (156 aa).

The transit peptide at 1 to 68 (MASRVLCACV…GTVTHLCRQY (68 aa)) directs the protein to the mitochondrion. A Carrier domain is found at 77-152 (DGIKDRVLYV…EIVDYIADKK (76 aa)). Position 88 is an N6-acetyllysine (lysine 88). Serine 112 bears the O-(pantetheine 4'-phosphoryl)serine mark.

Belongs to the acyl carrier protein (ACP) family. As to quaternary structure, mammalian complex I is composed of 45 different subunits. Interacts with ETFRF1. Identified in a complex composed of MALSU1, MIEF1 upstream open reading frame protein and NDUFAB1; within the trimeric complex, MIEF1 upstream open reading frame protein functions as a bridging scaffold that interacts with MALSU1 on one side, and with NDUFAB1 on the other side. The complex interacts with the mitochondrial large ribosomal subunit. Interacts with alpha-1-microglobulin chain; this interaction is required for the maintenance of mitochondrial redox homeostasis. Component of the mitochondrial core iron-sulfur cluster (ISC) complex composed of NFS1, LYRM4, NDUFAB1, ISCU, FXN, and FDX2; this complex is a heterohexamer containing two copies of each monomer. Component of the cyteine desulfurase complex composed of NFS1, LYRM4 and NDUFAB1; this complex contributes to the stability and cysteine desulfurase activity of NFS1. Post-translationally, phosphopantetheinylation at Ser-112 is essential for interactions with LYR motif-containing proteins.

It localises to the mitochondrion. Carrier of the growing fatty acid chain in fatty acid biosynthesis. Accessory and non-catalytic subunit of the mitochondrial membrane respiratory chain NADH dehydrogenase (Complex I), which functions in the transfer of electrons from NADH to the respiratory chain. Accessory protein, of the core iron-sulfur cluster (ISC) assembly complex, that regulates, in association with LYRM4, the stability and the cysteine desulfurase activity of NFS1 and participates in the [2Fe-2S] clusters assembly on the scaffolding protein ISCU. The core iron-sulfur cluster (ISC) assembly complex is involved in the de novo synthesis of a [2Fe-2S] cluster, the first step of the mitochondrial iron-sulfur protein biogenesis. This process is initiated by the cysteine desulfurase complex (NFS1:LYRM4:NDUFAB1) that produces persulfide which is delivered on the scaffold protein ISCU in a FXN-dependent manner. Then this complex is stabilized by FDX2 which provides reducing equivalents to accomplish the [2Fe-2S] cluster assembly. Finally, the [2Fe-2S] cluster is transferred from ISCU to chaperone proteins, including HSCB, HSPA9 and GLRX5. This Mus musculus (Mouse) protein is Acyl carrier protein, mitochondrial.